The sequence spans 417 residues: Frizzy aggregation protein FrzCD (417 aa).

Basic and acidic residues predominate over residues 1 to 11; sequence MSLDTPNEKPA. The disordered stretch occupies residues 1 to 34; the sequence is MSLDTPNEKPAGKARARKAPASKAGATNAASTSS. Residues 21-34 show a composition bias toward low complexity; the sequence is ASKAGATNAASTSS. One can recognise a Methyl-accepting transducer domain in the interval 144–380; it reads AALRLSSSAN…QVVASMAEIE (237 aa).

Belongs to the methyl-accepting chemotaxis (MCP) protein family. In terms of processing, methylated. Saturated fatty acids capric acid and lauric acid stimulate methylation. Short-chain alcohols, such as isoamyl alcohol, and some other solvents cause demethylation.

Its subcellular location is the cytoplasm. Its function is as follows. Methyl-accepting taxis protein necessary for the proper aggregation of cells to form fruiting bodies. Frz genes define a system of signal transduction analogous to the enterobacterial chemotaxis systems. This Myxococcus xanthus protein is Frizzy aggregation protein FrzCD (frzCD).